Consider the following 295-residue polypeptide: Acetylglutamate kinase (295 aa).

Substrate contacts are provided by residues 66–67, arginine 88, and asparagine 193; that span reads GG.

This sequence belongs to the acetylglutamate kinase family. ArgB subfamily.

The protein localises to the cytoplasm. It carries out the reaction N-acetyl-L-glutamate + ATP = N-acetyl-L-glutamyl 5-phosphate + ADP. Its pathway is amino-acid biosynthesis; L-arginine biosynthesis; N(2)-acetyl-L-ornithine from L-glutamate: step 2/4. Catalyzes the ATP-dependent phosphorylation of N-acetyl-L-glutamate. The chain is Acetylglutamate kinase from Gluconobacter oxydans (strain 621H) (Gluconobacter suboxydans).